The sequence spans 597 residues: Sulfite reductase [NADPH] flavoprotein alpha-component (597 aa).

The region spanning 62-200 (VTVLSASQTG…TADKWIQDVV (139 aa)) is the Flavodoxin-like domain. FMN-binding positions include 68–73 (SQTGNA), 115–118 (STQG), and 151–160 (LGDTSYPNFC). The FAD-binding FR-type domain occupies 232-446 (ENPYTAKLIT…VEPNDNFRLP (215 aa)). FAD is bound by residues threonine 320, asparagine 354, 384–387 (RLYS), 402–404 (SVG), and 417–420 (GVAS). NADP(+) contacts are provided by residues 517 to 518 (SR), 523 to 527 (KIYVQ), and aspartate 559. An FAD-binding site is contributed by tyrosine 597.

The protein belongs to the NADPH-dependent sulphite reductase flavoprotein subunit CysJ family. This sequence in the N-terminal section; belongs to the flavodoxin family. In the C-terminal section; belongs to the flavoprotein pyridine nucleotide cytochrome reductase family. Alpha(8)-beta(8). The alpha component is a flavoprotein, the beta component is a hemoprotein. FAD serves as cofactor. The cofactor is FMN.

The catalysed reaction is hydrogen sulfide + 3 NADP(+) + 3 H2O = sulfite + 3 NADPH + 4 H(+). It functions in the pathway sulfur metabolism; hydrogen sulfide biosynthesis; hydrogen sulfide from sulfite (NADPH route): step 1/1. In terms of biological role, component of the sulfite reductase complex that catalyzes the 6-electron reduction of sulfite to sulfide. This is one of several activities required for the biosynthesis of L-cysteine from sulfate. The flavoprotein component catalyzes the electron flow from NADPH -&gt; FAD -&gt; FMN to the hemoprotein component. The polypeptide is Sulfite reductase [NADPH] flavoprotein alpha-component (Mannheimia succiniciproducens (strain KCTC 0769BP / MBEL55E)).